Here is a 100-residue protein sequence, read N- to C-terminus: Urease subunit gamma (100 aa).

This sequence belongs to the urease gamma subunit family. Heterotrimer of UreA (gamma), UreB (beta) and UreC (alpha) subunits. Three heterotrimers associate to form the active enzyme.

The protein resides in the cytoplasm. The enzyme catalyses urea + 2 H2O + H(+) = hydrogencarbonate + 2 NH4(+). The protein operates within nitrogen metabolism; urea degradation; CO(2) and NH(3) from urea (urease route): step 1/1. The sequence is that of Urease subunit gamma from Actinobacillus pleuropneumoniae serotype 5b (strain L20).